A 269-amino-acid polypeptide reads, in one-letter code: Shikimate dehydrogenase (NADP(+)) (269 aa).

Residues 22 to 24 (TLS) and T68 each bind shikimate. The active-site Proton acceptor is the K72. 2 residues coordinate shikimate: N93 and D104. Residues 128–132 (GAGGA), 152–157 (NRTNLR), and F210 each bind NADP(+). Y212 is a shikimate binding site. Residue G233 coordinates NADP(+).

It belongs to the shikimate dehydrogenase family. As to quaternary structure, homodimer.

The catalysed reaction is shikimate + NADP(+) = 3-dehydroshikimate + NADPH + H(+). The protein operates within metabolic intermediate biosynthesis; chorismate biosynthesis; chorismate from D-erythrose 4-phosphate and phosphoenolpyruvate: step 4/7. In terms of biological role, involved in the biosynthesis of the chorismate, which leads to the biosynthesis of aromatic amino acids. Catalyzes the reversible NADPH linked reduction of 3-dehydroshikimate (DHSA) to yield shikimate (SA). The chain is Shikimate dehydrogenase (NADP(+)) from Saccharolobus islandicus (strain Y.N.15.51 / Yellowstone #2) (Sulfolobus islandicus).